We begin with the raw amino-acid sequence, 414 residues long: Serine/threonine transporter SstT (414 aa).

At 2–15 (TTQRSPGLFRRLAH) the chain is on the cytoplasmic side. A helical transmembrane segment spans residues 16–36 (GSLVKQILVGLVLGILLAWIS). Topologically, residues 37–45 (KPAAEAVGL) are periplasmic. A helical membrane pass occupies residues 46–66 (LGTLFVGALKAVAPILVLMLV). At 67–83 (MASIANHQHGQKTNIRP) the chain is on the cytoplasmic side. A helical membrane pass occupies residues 84–104 (ILFLYLLGTFSAALAAVVFSF). Residues 105–142 (AFPSTLHLSSSAGDISPPSGIVEVMRGLVMSMVSNPID) are Periplasmic-facing. The chain crosses the membrane as a helical span at residues 143–163 (ALLKGNYIGILVWAIGLGFAL). Residues 164–179 (RHGNETTKNLVNDMSN) are Cytoplasmic-facing. A helical membrane pass occupies residues 180–200 (AVTFMVKLVIRFAPIGIFGLV). Over 201 to 217 (SSTLATTGFSTLWGYAQ) the chain is Periplasmic. Residues 218–238 (LLVVLVGCMLLVALVVNPLLV) form a helical membrane-spanning segment. Residues 239–299 (WWKIRRNPFP…VSIPLGATIN (61 aa)) lie on the Cytoplasmic side of the membrane. The helical transmembrane segment at 300-320 (MAGAAITITVLTLAAVNTLGI) threads the bilayer. At 321 to 331 (PVDLPTALLLS) the chain is on the periplasmic side. A helical membrane pass occupies residues 332-352 (VVASLCACGASGVAGGSLLLI). Residues 353 to 414 (PLACNMFGIS…DRLANSALRN (62 aa)) lie on the Cytoplasmic side of the membrane.

Belongs to the dicarboxylate/amino acid:cation symporter (DAACS) (TC 2.A.23) family.

It is found in the cell inner membrane. It catalyses the reaction L-serine(in) + Na(+)(in) = L-serine(out) + Na(+)(out). It carries out the reaction L-threonine(in) + Na(+)(in) = L-threonine(out) + Na(+)(out). Involved in the import of serine and threonine into the cell, with the concomitant import of sodium (symport system). The polypeptide is Serine/threonine transporter SstT (Shigella flexneri serotype 5b (strain 8401)).